Here is a 291-residue protein sequence, read N- to C-terminus: Beta-lactamase CTX-M-14 (291 aa).

Residues 1 to 28 form the signal peptide; the sequence is MVTKRVQRMMFAAAACIPLLLGSAPLYA. Ser-73 (nucleophile; acyl-ester intermediate) is an active-site residue. Positions 76, 133, 169, and 240 each coordinate a beta-lactam.

It belongs to the class-A beta-lactamase family. In terms of assembly, monomer.

It is found in the secreted. It carries out the reaction a beta-lactam + H2O = a substituted beta-amino acid. Inhibited by the beta-lactamase-blocking agents clavulanic acid, tazobactam and sulbactam. Its function is as follows. Extended-spectrum beta-lactamase (ESBL) which confers resistance to penicillins, as well as first, second, and third-generation cephalosporins. Has cefotaxime-hydrolyzing activity. The protein is Beta-lactamase CTX-M-14 of Escherichia coli.